Consider the following 258-residue polypeptide: MLAKRIIPCLDVGNNKVIKGIQFKDHKIVGDILELANRYAKSGADELVFYDITASPNDQVVNKRWISQIAKVINIPFCVAGGINTLKQAKQILASGADKISINSPALINPMLIQELADHLGTQCVVVSIDTWHNPQKKIYQVKCYTGDSTRAKITTWQTLDWVKKVQEYGAGEIVLNMMNQDGMKNGYDLDQLRNIRKHCQVPLIASGGAGTYQHFLEAFRDADVDGALAASVFHNQIIDIHKLKQFLNKEGIKIRLC.

Residues Asp11 and Asp130 contribute to the active site.

The protein belongs to the HisA/HisF family. In terms of assembly, heterodimer of HisH and HisF.

It is found in the cytoplasm. The enzyme catalyses 5-[(5-phospho-1-deoxy-D-ribulos-1-ylimino)methylamino]-1-(5-phospho-beta-D-ribosyl)imidazole-4-carboxamide + L-glutamine = D-erythro-1-(imidazol-4-yl)glycerol 3-phosphate + 5-amino-1-(5-phospho-beta-D-ribosyl)imidazole-4-carboxamide + L-glutamate + H(+). The protein operates within amino-acid biosynthesis; L-histidine biosynthesis; L-histidine from 5-phospho-alpha-D-ribose 1-diphosphate: step 5/9. Its function is as follows. IGPS catalyzes the conversion of PRFAR and glutamine to IGP, AICAR and glutamate. The HisF subunit catalyzes the cyclization activity that produces IGP and AICAR from PRFAR using the ammonia provided by the HisH subunit. This chain is Imidazole glycerol phosphate synthase subunit HisF, found in Blochmanniella pennsylvanica (strain BPEN).